The sequence spans 220 residues: Probable L-serine dehydratase, beta chain (220 aa).

One can recognise an ACT domain in the interval 148–220 (AILVVHNDKF…NIIQVTKIAD (73 aa)).

Belongs to the iron-sulfur dependent L-serine dehydratase family. Heterodimer of an alpha chain and a beta chain. [4Fe-4S] cluster is required as a cofactor.

It carries out the reaction L-serine = pyruvate + NH4(+). The protein operates within carbohydrate biosynthesis; gluconeogenesis. This Bacillus subtilis (strain 168) protein is Probable L-serine dehydratase, beta chain (sdaAB).